We begin with the raw amino-acid sequence, 367 residues long: tRNA/tmRNA (uracil-C(5))-methyltransferase (367 aa).

The S-adenosyl-L-methionine site is built by Gln-190, Tyr-218, Asn-223, Glu-239, and Asp-299. Residue Cys-324 is the Nucleophile of the active site. The active-site Proton acceptor is the Glu-358.

It belongs to the class I-like SAM-binding methyltransferase superfamily. RNA M5U methyltransferase family. TrmA subfamily.

It carries out the reaction uridine(54) in tRNA + S-adenosyl-L-methionine = 5-methyluridine(54) in tRNA + S-adenosyl-L-homocysteine + H(+). The catalysed reaction is uridine(341) in tmRNA + S-adenosyl-L-methionine = 5-methyluridine(341) in tmRNA + S-adenosyl-L-homocysteine + H(+). In terms of biological role, dual-specificity methyltransferase that catalyzes the formation of 5-methyluridine at position 54 (m5U54) in all tRNAs, and that of position 341 (m5U341) in tmRNA (transfer-mRNA). The chain is tRNA/tmRNA (uracil-C(5))-methyltransferase from Dickeya chrysanthemi (strain Ech1591) (Dickeya zeae (strain Ech1591)).